The chain runs to 203 residues: Cold-regulated 413 plasma membrane protein 2 (203 aa).

Residues 1-43 lie on the Extracellular side of the membrane; the sequence is MGRMDYLAMKTDDVDTVALVNSDMEELKVAAKKLFSDVSKLGG. A helical membrane pass occupies residues 44–64; it reads LGFGVSFLKFLASFAAIYLLI. Over 65-74 the chain is Cytoplasmic; sequence LDRTNWKTKM. Residues 75 to 95 traverse the membrane as a helical segment; that stretch reads LTSLLIPYIFLSLPSVIFNFL. Residues 96–98 lie on the Extracellular side of the membrane; it reads SGD. Residues 99–119 form a helical membrane-spanning segment; that stretch reads VGKWIAFVAVVLRLFFPKHFP. Aspartate 120 is a topological domain (cytoplasmic). The helical transmembrane segment at 121 to 141 threads the bilayer; the sequence is WLEMPGSLILLLVVSPHFLAH. Topologically, residues 142–144 are extracellular; sequence HIR. The chain crosses the membrane as a helical span at residues 145–165; the sequence is GTWIGTVISLFIGCYLLQEHI. At 166–179 the chain is on the cytoplasmic side; sequence RASGGFRNSFTQPR. The chain crosses the membrane as a helical span at residues 180 to 200; that stretch reads GVSNTLGIILLLVYPVWALIV. At 201 to 203 the chain is on the extracellular side; sequence RVM.

Belongs to the Cold-regulated 413 protein family.

It is found in the cell membrane. This Arabidopsis thaliana (Mouse-ear cress) protein is Cold-regulated 413 plasma membrane protein 2 (COR413PM2).